The sequence spans 341 residues: L-threonine 3-dehydrogenase (341 aa).

Cysteine 38 is a Zn(2+) binding site. Residues threonine 40 and histidine 43 each act as charge relay system in the active site. Zn(2+) is bound by residues histidine 63, glutamate 64, cysteine 93, cysteine 96, cysteine 99, and cysteine 107. NAD(+) contacts are provided by residues isoleucine 175, aspartate 195, arginine 200, 262–264 (LGI), and 286–287 (IY).

The protein belongs to the zinc-containing alcohol dehydrogenase family. As to quaternary structure, homotetramer. Zn(2+) serves as cofactor.

Its subcellular location is the cytoplasm. It catalyses the reaction L-threonine + NAD(+) = (2S)-2-amino-3-oxobutanoate + NADH + H(+). Its pathway is amino-acid degradation; L-threonine degradation via oxydo-reductase pathway; glycine from L-threonine: step 1/2. Its function is as follows. Catalyzes the NAD(+)-dependent oxidation of L-threonine to 2-amino-3-ketobutyrate. The chain is L-threonine 3-dehydrogenase from Escherichia coli O157:H7.